The sequence spans 858 residues: DNA mismatch repair protein MutS (858 aa).

611-618 (GPNMGGKS) serves as a coordination point for ATP.

It belongs to the DNA mismatch repair MutS family.

Functionally, this protein is involved in the repair of mismatches in DNA. It is possible that it carries out the mismatch recognition step. This protein has a weak ATPase activity. This is DNA mismatch repair protein MutS from Actinobacillus succinogenes (strain ATCC 55618 / DSM 22257 / CCUG 43843 / 130Z).